The following is a 406-amino-acid chain: Renin (406 aa).

Positions 1 to 23 are cleaved as a signal peptide; sequence MDGWRRMPRWGLLLLLWGSCTFG. Positions 24–66 are cleaved as a propeptide — activation peptide; that stretch reads LPTDTTTFKRIFLKRMPSIRESLKERGVDMARLGPEWSQPMKR. N-linked (GlcNAc...) asparagine glycosylation is present at Asn71. Positions 86 to 403 constitute a Peptidase A1 domain; the sequence is YYGEIGIGTP…DRRNNRIGFA (318 aa). Residue Asp104 is part of the active site. Cysteines 117 and 124 form a disulfide. Asn141 is a glycosylation site (N-linked (GlcNAc...) asparagine). The cysteines at positions 283 and 287 are disulfide-linked. Asp292 is an active-site residue. Cys325 and Cys362 are joined by a disulfide.

This sequence belongs to the peptidase A1 family. As to quaternary structure, interacts with ATP6AP2.

It localises to the secreted. The protein resides in the membrane. It carries out the reaction Cleavage of Leu-|-Xaa bond in angiotensinogen to generate angiotensin I.. Its activity is regulated as follows. Interaction with ATP6AP2 results in a 5-fold increased efficiency in angiotensinogen processing. Renin is a highly specific endopeptidase, whose only known function is to generate angiotensin I from angiotensinogen in the plasma, initiating a cascade of reactions that produce an elevation of blood pressure and increased sodium retention by the kidney. This chain is Renin (REN), found in Homo sapiens (Human).